Consider the following 199-residue polypeptide: 3-isopropylmalate dehydratase small subunit (199 aa).

Belongs to the LeuD family. LeuD type 1 subfamily. Heterodimer of LeuC and LeuD.

The enzyme catalyses (2R,3S)-3-isopropylmalate = (2S)-2-isopropylmalate. It participates in amino-acid biosynthesis; L-leucine biosynthesis; L-leucine from 3-methyl-2-oxobutanoate: step 2/4. Functionally, catalyzes the isomerization between 2-isopropylmalate and 3-isopropylmalate, via the formation of 2-isopropylmaleate. The protein is 3-isopropylmalate dehydratase small subunit of Mycobacteroides abscessus (strain ATCC 19977 / DSM 44196 / CCUG 20993 / CIP 104536 / JCM 13569 / NCTC 13031 / TMC 1543 / L948) (Mycobacterium abscessus).